Reading from the N-terminus, the 266-residue chain is Undecaprenyl-diphosphatase (266 aa).

Transmembrane regions (helical) follow at residues 39-59 (PGAS…AYYF), 86-106 (SIFI…IFIP), 112-132 (VLRS…FMYL), 147-167 (NFSN…PGVS), 189-209 (FSFL…FVSS), 216-236 (LGFF…LLAI), and 246-266 (NGLK…LLNL).

This sequence belongs to the UppP family.

Its subcellular location is the cell inner membrane. The catalysed reaction is di-trans,octa-cis-undecaprenyl diphosphate + H2O = di-trans,octa-cis-undecaprenyl phosphate + phosphate + H(+). Its function is as follows. Catalyzes the dephosphorylation of undecaprenyl diphosphate (UPP). Confers resistance to bacitracin. The sequence is that of Undecaprenyl-diphosphatase from Prochlorococcus marinus (strain MIT 9301).